A 174-amino-acid polypeptide reads, in one-letter code: Chorismate pyruvate-lyase (174 aa).

Substrate is bound by residues methionine 36, arginine 78, leucine 116, and glutamate 157.

This sequence belongs to the UbiC family. In terms of assembly, monomer.

The protein localises to the cytoplasm. It carries out the reaction chorismate = 4-hydroxybenzoate + pyruvate. It functions in the pathway cofactor biosynthesis; ubiquinone biosynthesis. Its function is as follows. Removes the pyruvyl group from chorismate, with concomitant aromatization of the ring, to provide 4-hydroxybenzoate (4HB) for the ubiquinone pathway. The polypeptide is Chorismate pyruvate-lyase (Erwinia tasmaniensis (strain DSM 17950 / CFBP 7177 / CIP 109463 / NCPPB 4357 / Et1/99)).